Reading from the N-terminus, the 260-residue chain is 3'-5' ssDNA/RNA exonuclease TatD (260 aa).

A divalent metal cation is bound by residues Glu92, His128, and His153.

The protein belongs to the metallo-dependent hydrolases superfamily. TatD-type hydrolase family. TatD subfamily. In terms of assembly, monomer. The cofactor is Mg(2+).

It localises to the cytoplasm. Its function is as follows. 3'-5' exonuclease that prefers single-stranded DNA and RNA. May play a role in the H(2)O(2)-induced DNA damage repair. The chain is 3'-5' ssDNA/RNA exonuclease TatD from Edwardsiella piscicida.